A 340-amino-acid chain; its full sequence is Dihydroorotate dehydrogenase (quinone) (340 aa).

Residues 61–65 and threonine 85 each bind FMN; that span reads AGLDK. A substrate-binding site is contributed by lysine 65. 110-114 lines the substrate pocket; it reads NRMGF. FMN is bound by residues asparagine 138 and asparagine 171. Substrate is bound at residue asparagine 171. Serine 174 serves as the catalytic Nucleophile. Asparagine 176 is a substrate binding site. FMN-binding residues include lysine 216 and threonine 244. 245-246 serves as a coordination point for substrate; sequence NT. Residues glycine 267, glycine 296, and 317–318 contribute to the FMN site; that span reads YT.

It belongs to the dihydroorotate dehydrogenase family. Type 2 subfamily. In terms of assembly, monomer. Requires FMN as cofactor.

It localises to the cell membrane. It catalyses the reaction (S)-dihydroorotate + a quinone = orotate + a quinol. Its pathway is pyrimidine metabolism; UMP biosynthesis via de novo pathway; orotate from (S)-dihydroorotate (quinone route): step 1/1. Functionally, catalyzes the conversion of dihydroorotate to orotate with quinone as electron acceptor. This chain is Dihydroorotate dehydrogenase (quinone), found in Marinobacter nauticus (strain ATCC 700491 / DSM 11845 / VT8) (Marinobacter aquaeolei).